We begin with the raw amino-acid sequence, 2233 residues long: Acetyl-CoA carboxylase (2233 aa).

Serine 2 is subject to N-acetylserine. At serine 2 the chain carries Phosphoserine. Residues 58–567 form the Biotin carboxylation domain; the sequence is VISKILIANN…TTGWLDDLIT (510 aa). An ATP-grasp domain is found at 216-408; that stretch reads KTGLVSVDDD…LPAAQLQIAM (193 aa). An ATP-binding site is contributed by 256 to 261; the sequence is GGGGKG. Mn(2+) is bound by residues glutamate 365, glutamate 379, and asparagine 381. Arginine 383 is an active-site residue. Residues 694–768 form the Biotinyl-binding domain; it reads LEVENDPTQL…VAGDIMAIMT (75 aa). Lysine 735 is modified (N6-biotinyllysine). Residues serine 790, serine 1148, serine 1157, and serine 1162 each carry the phosphoserine modification. Positions 1486-1822 constitute a CoA carboxyltransferase N-terminal domain; sequence PYPVKEWLQP…KRNMPVPILE (337 aa). The segment at 1486–2141 is carboxyltransferase; sequence PYPVKEWLQP…EEYLIKRLSH (656 aa). Residue 1627 to 1629 coordinates acetyl-CoA; the sequence is ARI. Position 1731 (arginine 1731) interacts with CoA. The CoA carboxyltransferase C-terminal domain occupies 1826-2141; that stretch reads TWDRPVDFTP…EEYLIKRLSH (316 aa). Glycine 1998 is a binding site for acetyl-CoA. Residues lysine 2034 and arginine 2036 each contribute to the CoA site.

In terms of assembly, homodimer. The cofactor is biotin. Mn(2+) serves as cofactor.

The protein resides in the cytoplasm. The protein localises to the endoplasmic reticulum membrane. The enzyme catalyses hydrogencarbonate + acetyl-CoA + ATP = malonyl-CoA + ADP + phosphate + H(+). It catalyses the reaction N(6)-biotinyl-L-lysyl-[protein] + hydrogencarbonate + ATP = N(6)-carboxybiotinyl-L-lysyl-[protein] + ADP + phosphate + H(+). The protein operates within lipid metabolism; malonyl-CoA biosynthesis; malonyl-CoA from acetyl-CoA: step 1/1. By phosphorylation. The catalytic activity is inhibited by soraphen A, a polyketide isolated from the myxobacterium Sorangium cellulosum and a potent inhibitor of fungal growth. Its function is as follows. Carries out three functions: biotin carboxyl carrier protein, biotin carboxylase and carboxyltransferase. Involved in the synthesis of very-long-chain fatty acid synthesis which is required to maintain a functional nuclear envelope. Required for acylation and vacuolar membrane association of VAC8 which is necessary to maintain a normal morphology of the vacuole. This Saccharomyces cerevisiae (strain ATCC 204508 / S288c) (Baker's yeast) protein is Acetyl-CoA carboxylase (ACC1).